The primary structure comprises 287 residues: NAD-dependent protein deacylase sir-2.2 (287 aa).

One can recognise a Deacetylase sirtuin-type domain in the interval 10–287 (AELCENSLKK…YKISDVLKEM (278 aa)). NAD(+) is bound by residues 35-55 (GAGI…VGLY) and 116-119 (QNVD). The active-site Proton acceptor is the histidine 134. 4 residues coordinate Zn(2+): cysteine 142, cysteine 145, cysteine 196, and cysteine 199. Residues 236–238 (GTS), 262–264 (NIG), and isoleucine 280 contribute to the NAD(+) site.

Belongs to the sirtuin family. Class II subfamily. Interacts with pyc-1, pcca-1 and mccc-1. Requires Zn(2+) as cofactor. In terms of tissue distribution, ubiquitously expressed with high expression in the pharynx, body wall muscles and gonad.

Its subcellular location is the mitochondrion matrix. The protein resides in the mitochondrion. It carries out the reaction N(6)-acetyl-L-lysyl-[protein] + NAD(+) + H2O = 2''-O-acetyl-ADP-D-ribose + nicotinamide + L-lysyl-[protein]. NAD-dependent protein deacylase. Catalyzes the NAD-dependent hydrolysis of acyl groups from lysine residues. Plays a role in oxidative stress resistance. The chain is NAD-dependent protein deacylase sir-2.2 (sir-2.2) from Caenorhabditis elegans.